A 203-amino-acid chain; its full sequence is Mpv17-like protein (203 aa).

Topologically, residues 1 to 12 (MRILIQFTKRHP) are cytoplasmic. Residues 13 to 30 (WLTNVTIYGSLFASADIV) form a helical membrane-spanning segment. The Lumenal portion of the chain corresponds to 31-49 (QQKLSKSPTEPIDFKQTAK). A helical transmembrane segment spans residues 50 to 69 (VGLVGFCFHANFNFFWLRFI). Residues 70-89 (ERTFPGSAPLNVIRKVACDQ) are Cytoplasmic-facing. A helical membrane pass occupies residues 90–107 (LMAAPITISAFYTGLSLL). Residues 108-143 (DGERDVFKNLKEKFWPTYKTGVMCWTVFQTINFSVI) are Lumenal-facing. A helical membrane pass occupies residues 144 to 166 (PPFVRTAYIGVCAFLWTTFLCYI). Residues 167–203 (RNRDINEVTTRLLHAVPNIRGKMAFPQDQDDNKPADK) lie on the Cytoplasmic side of the membrane.

It belongs to the peroxisomal membrane protein PXMP2/4 family.

It is found in the peroxisome membrane. Participates in reactive oxygen species metabolism by up- or down-regulation of the genes of antioxidant enzymes. Protective against the mitochondrial apoptotic cascade. This chain is Mpv17-like protein (mpv17l), found in Xenopus laevis (African clawed frog).